The primary structure comprises 529 residues: BAR/IMD domain-containing adapter protein 2-like 2 (529 aa).

The 239-residue stretch at 1-239 (MAPEMDQFYR…HSPGLLGPVL (239 aa)) folds into the IMD domain. Disordered stretches follow at residues 221–332 (EASR…GGAR) and 399–529 (NPLN…PLIR). Phosphoserine occurs at positions 231, 272, and 304. Over residues 301 to 317 (SASSLYSSSTQRSRSNS) the composition is skewed to low complexity. Residues 321–331 (RPGGGGGGGGA) are compositionally biased toward gly residues. The SH3 domain occupies 329 to 392 (GGARRVRALV…PEAYVKPLDE (64 aa)). Polar residues predominate over residues 439 to 459 (GNSTASSDYWDGQSRSRTPSH). Over residues 473–484 (PSSRRSSMGSMG) the composition is skewed to low complexity. A phosphoserine mark is found at serine 479 and serine 482.

Its subcellular location is the cell membrane. The protein localises to the cell junction. It localises to the cytoplasmic vesicle membrane. Its function is as follows. Phosphoinositides-binding protein that induces the formation of planar or gently curved membrane structures. Binds to phosphoinositides, including to phosphatidylinositol 4,5-bisphosphate (PtdIns(4,5)P2) headgroups. There seems to be no clear preference for a specific phosphoinositide. The chain is BAR/IMD domain-containing adapter protein 2-like 2 (BAIAP2L2) from Bos taurus (Bovine).